A 211-amino-acid polypeptide reads, in one-letter code: ATP phosphoribosyltransferase (211 aa).

This sequence belongs to the ATP phosphoribosyltransferase family. Short subfamily. Heteromultimer composed of HisG and HisZ subunits.

The protein resides in the cytoplasm. The catalysed reaction is 1-(5-phospho-beta-D-ribosyl)-ATP + diphosphate = 5-phospho-alpha-D-ribose 1-diphosphate + ATP. The protein operates within amino-acid biosynthesis; L-histidine biosynthesis; L-histidine from 5-phospho-alpha-D-ribose 1-diphosphate: step 1/9. Functionally, catalyzes the condensation of ATP and 5-phosphoribose 1-diphosphate to form N'-(5'-phosphoribosyl)-ATP (PR-ATP). Has a crucial role in the pathway because the rate of histidine biosynthesis seems to be controlled primarily by regulation of HisG enzymatic activity. This Ectopseudomonas mendocina (strain ymp) (Pseudomonas mendocina) protein is ATP phosphoribosyltransferase.